A 398-amino-acid chain; its full sequence is Arginine biosynthesis bifunctional protein ArgJ (398 aa).

Substrate-binding residues include threonine 148, lysine 174, threonine 185, glutamate 271, asparagine 393, and threonine 398. The Nucleophile role is filled by threonine 185.

The protein belongs to the ArgJ family. Heterotetramer of two alpha and two beta chains.

Its subcellular location is the cytoplasm. It catalyses the reaction N(2)-acetyl-L-ornithine + L-glutamate = N-acetyl-L-glutamate + L-ornithine. The enzyme catalyses L-glutamate + acetyl-CoA = N-acetyl-L-glutamate + CoA + H(+). It functions in the pathway amino-acid biosynthesis; L-arginine biosynthesis; L-ornithine and N-acetyl-L-glutamate from L-glutamate and N(2)-acetyl-L-ornithine (cyclic): step 1/1. Its pathway is amino-acid biosynthesis; L-arginine biosynthesis; N(2)-acetyl-L-ornithine from L-glutamate: step 1/4. Functionally, catalyzes two activities which are involved in the cyclic version of arginine biosynthesis: the synthesis of N-acetylglutamate from glutamate and acetyl-CoA as the acetyl donor, and of ornithine by transacetylation between N(2)-acetylornithine and glutamate. This is Arginine biosynthesis bifunctional protein ArgJ from Listeria monocytogenes serotype 4b (strain F2365).